A 477-amino-acid chain; its full sequence is PTS system glucose-specific EIICB component (477 aa).

Residues 1 to 14 (MFKNAFANLQKVGK) lie on the Cytoplasmic side of the membrane. In terms of domain architecture, PTS EIIC type-1 spans 1–388 (MFKNAFANLQ…LDLKTPGRED (388 aa)). Residues 15-35 (SLMLPVSVLPIAGILLGVGSA) traverse the membrane as a helical segment. Over 36 to 50 (NFSWLPAVVSHVMAE) the chain is Periplasmic. The chain crosses the membrane as a helical span at residues 51-71 (AGGSVFANMPLIFAIGVALGF). Over 72 to 79 (TNNDGVSA) the chain is Cytoplasmic. The chain crosses the membrane as a helical span at residues 80-100 (LAAVVAYGIMVKTMAVVAPLV). At 101–111 (LHLPAEEIASK) the chain is on the periplasmic side. A helical membrane pass occupies residues 112–132 (HLADTGVLGGIISGAIAAYMF). Residues 133 to 151 (NRFYRIKLPEYLGFFAGKR) are Cytoplasmic-facing. A helical transmembrane segment spans residues 152 to 172 (FVPIISGLAAIFTGVVLSFIW). Residues 173 to 190 (PPIGSAIQTFSQWAAYQN) are Periplasmic-facing. A helical membrane pass occupies residues 191 to 211 (PVVAFGIYGFIERCLVPFGLH). Over 212–249 (HIWNVPFQMQIGEYTNAAGQVFHGDIPRYMAGDPTAGK) the chain is Cytoplasmic. The chain crosses the membrane as a helical span at residues 250–270 (LSGGFLFKMYGLPAAAIAIWH). The Periplasmic segment spans residues 271–279 (SAKPENRAK). The helical transmembrane segment at 280–300 (VGGIMISAALTSFLTGITEPI) threads the bilayer. Over 301-309 (EFSFMFVAP) the chain is Cytoplasmic. A helical membrane pass occupies residues 310 to 330 (ILYIIHAILAGLAFPICILLG). At 331 to 355 (MRDGTSFSHGLIDFIVLSGNSSKLW) the chain is on the periplasmic side. The helical transmembrane segment at 356–376 (LFPIVGIGYAIVYYTIFRVLI) threads the bilayer. Residues 377-477 (KALDLKTPGR…TEMDEYIRNH (101 aa)) are Cytoplasmic-facing. Residues 399–477 (SEMAPALVAA…TEMDEYIRNH (79 aa)) enclose the PTS EIIB type-1 domain. C421 functions as the Phosphocysteinsyse intermediate; for EIIB activity in the catalytic mechanism. At C421 the chain carries Phosphocysteine.

The protein localises to the cell inner membrane. It catalyses the reaction N(pros)-phospho-L-histidyl-[protein] + D-glucose(out) = D-glucose 6-phosphate(in) + L-histidyl-[protein]. In terms of biological role, the phosphoenolpyruvate-dependent sugar phosphotransferase system (sugar PTS), a major carbohydrate active transport system, catalyzes the phosphorylation of incoming sugar substrates concomitantly with their translocation across the cell membrane. The enzyme II complex composed of PtsG and Crr is involved in glucose transport. Also functions as a chemoreceptor monitoring the environment for changes in sugar concentration. This is PTS system glucose-specific EIICB component (ptsG) from Escherichia coli O6:H1 (strain CFT073 / ATCC 700928 / UPEC).